The chain runs to 116 residues: Protein Rev (116 aa).

Phosphoserine; by host CK2 is present on residues Ser-5 and Ser-8. The interval 18 to 26 is homomultimerization; sequence LIKFLYQSN. The interval 23 to 48 is disordered; it reads YQSNPPPKPEGTRQARRNRRRRWRER. A Nuclear localization signal and RNA-binding (RRE) motif is present at residues 34-50; sequence TRQARRNRRRRWRERQR. Residues 36–47 are compositionally biased toward basic residues; the sequence is QARRNRRRRWRE. The short motif at 73 to 84 is the Nuclear export signal and binding to XPO1 element; it reads LQLPPLERLTLD. A phosphoserine; by host mark is found at Ser-92 and Ser-99. The segment at 92 to 116 is disordered; that stretch reads SGTQGVGSPQILVESPTVLESGTKE.

This sequence belongs to the HIV-1 REV protein family. As to quaternary structure, homomultimer; when bound to the RRE. Multimeric assembly is essential for activity and may involve XPO1. Binds to human KPNB1, XPO1, TNPO1, RANBP5 and IPO7. Interacts with the viral Integrase. Interacts with human KHDRBS1. Interacts with human NAP1; this interaction decreases Rev multimerization and stimulates its activity. Interacts with human DEAD-box helicases DDX3 and DDX24; these interactions may serve for viral RNA export to the cytoplasm and packaging, respectively. Interacts with human PSIP1; this interaction may inhibit HIV-1 DNA integration by promoting dissociation of the Integrase-LEDGF/p75 complex. Asymmetrically arginine dimethylated at one site by host PRMT6. Methylation impairs the RNA-binding activity and export of viral RNA from the nucleus to the cytoplasm. Post-translationally, phosphorylated by protein kinase CK2. Presence of, and maybe binding to the N-terminus of the regulatory beta subunit of CK2 is necessary for CK2-mediated Rev's phosphorylation.

It localises to the host nucleus. The protein localises to the host nucleolus. Its subcellular location is the host cytoplasm. Functionally, escorts unspliced or incompletely spliced viral pre-mRNAs (late transcripts) out of the nucleus of infected cells. These pre-mRNAs carry a recognition sequence called Rev responsive element (RRE) located in the env gene, that is not present in fully spliced viral mRNAs (early transcripts). This function is essential since most viral proteins are translated from unspliced or partially spliced pre-mRNAs which cannot exit the nucleus by the pathway used by fully processed cellular mRNAs. Rev itself is translated from a fully spliced mRNA that readily exits the nucleus. Rev's nuclear localization signal (NLS) binds directly to KPNB1/Importin beta-1 without previous binding to KPNA1/Importin alpha-1. KPNB1 binds to the GDP bound form of RAN (Ran-GDP) and targets Rev to the nucleus. In the nucleus, the conversion from Ran-GDP to Ran-GTP dissociates Rev from KPNB1 and allows Rev's binding to the RRE in viral pre-mRNAs. Rev multimerization on the RRE via cooperative assembly exposes its nuclear export signal (NES) to the surface. Rev can then form a complex with XPO1/CRM1 and Ran-GTP, leading to nuclear export of the complex. Conversion from Ran-GTP to Ran-GDP mediates dissociation of the Rev/RRE/XPO1/RAN complex, so that Rev can return to the nucleus for a subsequent round of export. Beside KPNB1, also seems to interact with TNPO1/Transportin-1, RANBP5/IPO5 and IPO7/RANBP7 for nuclear import. The nucleoporin-like HRB/RIP is an essential cofactor that probably indirectly interacts with Rev to release HIV RNAs from the perinuclear region to the cytoplasm. The sequence is that of Protein Rev from Human immunodeficiency virus type 1 group M subtype B (isolate SC) (HIV-1).